We begin with the raw amino-acid sequence, 182 residues long: Ribosome maturation factor RimM (182 aa).

The 80-residue stretch at glutamate 103–phenylalanine 182 folds into the PRC barrel domain.

It belongs to the RimM family. Binds ribosomal protein uS19.

The protein resides in the cytoplasm. An accessory protein needed during the final step in the assembly of 30S ribosomal subunit, possibly for assembly of the head region. Essential for efficient processing of 16S rRNA. May be needed both before and after RbfA during the maturation of 16S rRNA. It has affinity for free ribosomal 30S subunits but not for 70S ribosomes. This chain is Ribosome maturation factor RimM, found in Vibrio cholerae serotype O1 (strain ATCC 39315 / El Tor Inaba N16961).